Reading from the N-terminus, the 552-residue chain is Urocanate hydratase (552 aa).

NAD(+) is bound by residues 49–50 (GG), glutamine 127, 173–175 (GMG), aspartate 193, 239–240 (NA), 260–264 (QTSAH), 270–271 (YI), and tyrosine 319. Cysteine 407 is a catalytic residue. Glycine 489 contacts NAD(+).

The protein belongs to the urocanase family. NAD(+) is required as a cofactor.

It localises to the cytoplasm. It catalyses the reaction 4-imidazolone-5-propanoate = trans-urocanate + H2O. It participates in amino-acid degradation; L-histidine degradation into L-glutamate; N-formimidoyl-L-glutamate from L-histidine: step 2/3. In terms of biological role, catalyzes the conversion of urocanate to 4-imidazolone-5-propionate. The sequence is that of Urocanate hydratase from Bacillus cereus (strain 03BB102).